A 386-amino-acid polypeptide reads, in one-letter code: 1-deoxy-D-xylulose 5-phosphate reductoisomerase (386 aa).

NADPH is bound by residues Thr-10, Gly-11, Ser-12, Ile-13, Gly-36, Asn-38, and Asn-122. Position 123 (Lys-123) interacts with 1-deoxy-D-xylulose 5-phosphate. An NADPH-binding site is contributed by Glu-124. Asp-148 contributes to the Mn(2+) binding site. The 1-deoxy-D-xylulose 5-phosphate site is built by Ser-149, Glu-150, Ser-174, and His-197. Glu-150 is a Mn(2+) binding site. Gly-203 lines the NADPH pocket. Residues Ser-210, Asn-215, Lys-216, and Glu-219 each coordinate 1-deoxy-D-xylulose 5-phosphate. Glu-219 is a binding site for Mn(2+).

Belongs to the DXR family. Requires Mg(2+) as cofactor. The cofactor is Mn(2+).

The enzyme catalyses 2-C-methyl-D-erythritol 4-phosphate + NADP(+) = 1-deoxy-D-xylulose 5-phosphate + NADPH + H(+). Its pathway is isoprenoid biosynthesis; isopentenyl diphosphate biosynthesis via DXP pathway; isopentenyl diphosphate from 1-deoxy-D-xylulose 5-phosphate: step 1/6. In terms of biological role, catalyzes the NADPH-dependent rearrangement and reduction of 1-deoxy-D-xylulose-5-phosphate (DXP) to 2-C-methyl-D-erythritol 4-phosphate (MEP). In Geotalea uraniireducens (strain Rf4) (Geobacter uraniireducens), this protein is 1-deoxy-D-xylulose 5-phosphate reductoisomerase.